Reading from the N-terminus, the 507-residue chain is MEFSVRAAELTTLLESRITNFYTNFQVDEIGRVVSVGDGIARVYGLNEIQAGELVEFASGVKGIALNLENENVGIVVFGSDTSIKEGDLVKRTGSIVDVPAGKAMLGRVVDALGVPIDGRGALSDHERRRVEVKAPGIIERKSVHEPMQTGLKAVDSLVPIGRGQRELIIGDRQTGKTAIAIDTILNQKQMNSRATSESETLYCVYVAIGQKRSTVAQLVQILSEANALEYSILVAATASDPAPLQFLAPYSGCAMGEYFRDNGMHALIIYDDLSKQAVAYRQMSLLLRRPPGREAFPGDVFYLHSRLLERAAKRSDQTGAGSLTALPVIETQAGDVSAYIPTNVISITDGQICLETELFYRGIRPAINVGLSVSRVGSAAQLKAMKQVCGSLKLELAQYREVAAFAQFGSDLDAATQALLNRGARLTEVLKQPQYAPLPIEKQILVIYAAVNGFCDRMPLDKIAQYERDILSTIKQELLQSLKGGLTGERKIEPDAFLKEKALSLI.

171–178 (GDRQTGKT) is a binding site for ATP.

The protein belongs to the ATPase alpha/beta chains family. As to quaternary structure, F-type ATPases have 2 components, CF(1) - the catalytic core - and CF(0) - the membrane proton channel. CF(1) has five subunits: alpha(3), beta(3), gamma(1), delta(1), epsilon(1). CF(0) has three main subunits: a, b and c.

The protein localises to the mitochondrion. The protein resides in the mitochondrion inner membrane. In terms of biological role, mitochondrial membrane ATP synthase (F(1)F(0) ATP synthase or Complex V) produces ATP from ADP in the presence of a proton gradient across the membrane which is generated by electron transport complexes of the respiratory chain. F-type ATPases consist of two structural domains, F(1) - containing the extramembraneous catalytic core, and F(0) - containing the membrane proton channel, linked together by a central stalk and a peripheral stalk. During catalysis, ATP synthesis in the catalytic domain of F(1) is coupled via a rotary mechanism of the central stalk subunits to proton translocation. Subunits alpha and beta form the catalytic core in F(1). Rotation of the central stalk against the surrounding alpha(3)beta(3) subunits leads to hydrolysis of ATP in three separate catalytic sites on the beta subunits. Subunit alpha does not bear the catalytic high-affinity ATP-binding sites. This Pisum sativum (Garden pea) protein is ATP synthase subunit alpha, mitochondrial (ATPA).